Consider the following 310-residue polypeptide: Transaldolase (310 aa).

Residue K124 is the Schiff-base intermediate with substrate of the active site.

It belongs to the transaldolase family. Type 1 subfamily. As to quaternary structure, homodimer.

It localises to the cytoplasm. It catalyses the reaction D-sedoheptulose 7-phosphate + D-glyceraldehyde 3-phosphate = D-erythrose 4-phosphate + beta-D-fructose 6-phosphate. It functions in the pathway carbohydrate degradation; pentose phosphate pathway; D-glyceraldehyde 3-phosphate and beta-D-fructose 6-phosphate from D-ribose 5-phosphate and D-xylulose 5-phosphate (non-oxidative stage): step 2/3. Transaldolase is important for the balance of metabolites in the pentose-phosphate pathway. The sequence is that of Transaldolase from Teredinibacter turnerae (strain ATCC 39867 / T7901).